Here is an 837-residue protein sequence, read N- to C-terminus: Protein translocase subunit SecA (837 aa).

Residues Gln87, 105–109 (GEGKT), and Asp494 contribute to the ATP site. The tract at residues 788–837 (HKESKSDLEYSDSENTETKKKPKRRSEPKVGRNDPCPCGSGKKYKKCCGK) is disordered. 4 residues coordinate Zn(2+): Cys823, Cys825, Cys834, and Cys835.

Belongs to the SecA family. Monomer and homodimer. Part of the essential Sec protein translocation apparatus which comprises SecA, SecYEG and auxiliary proteins SecDF-YajC and YidC. Requires Zn(2+) as cofactor.

It is found in the cell inner membrane. Its subcellular location is the cytoplasm. It carries out the reaction ATP + H2O + cellular proteinSide 1 = ADP + phosphate + cellular proteinSide 2.. Part of the Sec protein translocase complex. Interacts with the SecYEG preprotein conducting channel. Has a central role in coupling the hydrolysis of ATP to the transfer of proteins into and across the cell membrane, serving as an ATP-driven molecular motor driving the stepwise translocation of polypeptide chains across the membrane. This chain is Protein translocase subunit SecA, found in Maridesulfovibrio salexigens (strain ATCC 14822 / DSM 2638 / NCIMB 8403 / VKM B-1763) (Desulfovibrio salexigens).